An 881-amino-acid polypeptide reads, in one-letter code: Alanine--tRNA ligase (881 aa).

Residues 422-440 are compositionally biased toward basic and acidic residues; the sequence is FEDEMQKQKERARSARSTE. The disordered stretch occupies residues 422 to 445; the sequence is FEDEMQKQKERARSARSTEKSMGV. Residues H567, H571, C669, and H673 each coordinate Zn(2+).

This sequence belongs to the class-II aminoacyl-tRNA synthetase family. The cofactor is Zn(2+).

Its subcellular location is the cytoplasm. It catalyses the reaction tRNA(Ala) + L-alanine + ATP = L-alanyl-tRNA(Ala) + AMP + diphosphate. Functionally, catalyzes the attachment of alanine to tRNA(Ala) in a two-step reaction: alanine is first activated by ATP to form Ala-AMP and then transferred to the acceptor end of tRNA(Ala). Also edits incorrectly charged Ser-tRNA(Ala) and Gly-tRNA(Ala) via its editing domain. The polypeptide is Alanine--tRNA ligase (Pediococcus pentosaceus (strain ATCC 25745 / CCUG 21536 / LMG 10740 / 183-1w)).